Reading from the N-terminus, the 76-residue chain is Small ribosomal subunit protein bS18 (76 aa).

It belongs to the bacterial ribosomal protein bS18 family. In terms of assembly, part of the 30S ribosomal subunit. Forms a tight heterodimer with protein bS6.

Functionally, binds as a heterodimer with protein bS6 to the central domain of the 16S rRNA, where it helps stabilize the platform of the 30S subunit. This is Small ribosomal subunit protein bS18 from Alkaliphilus metalliredigens (strain QYMF).